Reading from the N-terminus, the 671-residue chain is DNA ligase (671 aa).

Residues 32–36 (DAEYD), 81–82 (SL), and Glu-113 each bind NAD(+). Lys-115 serves as the catalytic N6-AMP-lysine intermediate. Arg-136, Glu-173, Lys-290, and Lys-314 together coordinate NAD(+). Positions 408, 411, 426, and 432 each coordinate Zn(2+). Positions 593–671 (EIDSPFAGKT…EAEMIRLLGA (79 aa)) constitute a BRCT domain.

It belongs to the NAD-dependent DNA ligase family. LigA subfamily. The cofactor is Mg(2+). Requires Mn(2+) as cofactor.

The enzyme catalyses NAD(+) + (deoxyribonucleotide)n-3'-hydroxyl + 5'-phospho-(deoxyribonucleotide)m = (deoxyribonucleotide)n+m + AMP + beta-nicotinamide D-nucleotide.. DNA ligase that catalyzes the formation of phosphodiester linkages between 5'-phosphoryl and 3'-hydroxyl groups in double-stranded DNA using NAD as a coenzyme and as the energy source for the reaction. It is essential for DNA replication and repair of damaged DNA. In Salmonella paratyphi A (strain ATCC 9150 / SARB42), this protein is DNA ligase.